The chain runs to 533 residues: Acetone monooxygenase (methyl acetate-forming) (533 aa).

FAD is bound by residues 43–46 (TWYW), 55–56 (DS), and tyrosine 61. 53 to 55 (RFD) contacts NADP(+). NADP(+)-binding positions include 183-189 (NGATGIQ), 206-207 (RT), and tryptophan 492.

The protein belongs to the FAD-binding monooxygenase family. In terms of assembly, homotetramer. Requires FAD as cofactor.

The catalysed reaction is acetone + NADPH + O2 + H(+) = methyl acetate + NADP(+) + H2O. In terms of biological role, plays an important role in the metabolism of acetone derived from propane oxidation. Catalyzes the oxidation of acetone to methyl acetate. Exhibits high catalytic efficiency towards various linear and cyclic ketones, such as butanone, 2-pentanone, 2-heptanone, 2-octanone, 2-nonanone, 2-decanone, cyclobutanone, cyclopentanone and cyclohexanone. Elicits the highest catalytic efficiency towards butanone and cyclobutanone. Is highly specific for NADPH and cannot use NADH. The sequence is that of Acetone monooxygenase (methyl acetate-forming) from Gordonia sp. (strain TY-5).